Here is a 448-residue protein sequence, read N- to C-terminus: T-box transcription factor T homolog 1 (448 aa).

Positions 54–224 (LWDKFNALTN…YNPFAKAFLD (171 aa)) form a DNA-binding region, T-box. Disordered stretches follow at residues 290–312 (APYP…TAAS) and 401–448 (TTAS…PPSL). Over residues 417–442 (STDSGYGHSTTPPAPQTRITSNNWSP) the composition is skewed to polar residues.

It localises to the nucleus. Its function is as follows. Involved in the transcriptional regulation of genes required for mesoderm formation and differentiation. The sequence is that of T-box transcription factor T homolog 1 from Branchiostoma floridae (Florida lancelet).